The primary structure comprises 175 residues: MASLRVERAGGPRLPRTRVGRPAALRLLLLLGAVLNPHEALAQPLPTTGTPGSEGGTVKNYETAVQFCWNHYKDQMDPIEKDWCDWAMISRPYSTLRDCLEHFAELFDLGFPNPLAERIIFETHQIHFANCSLVQPTFSDPPEDVLLAMIIAPICLIPFLITLVVWRSKDSEAQA.

The signal sequence occupies residues 1–42 (MASLRVERAGGPRLPRTRVGRPAALRLLLLLGAVLNPHEALA). Over 43-143 (QPLPTTGTPG…VQPTFSDPPE (101 aa)) the chain is Extracellular. 2 disulfide bridges follow: C68–C99 and C84–C131. N130 carries N-linked (GlcNAc...) asparagine glycosylation. The helical transmembrane segment at 144-165 (DVLLAMIIAPICLIPFLITLVV) threads the bilayer. At 166 to 175 (WRSKDSEAQA) the chain is on the cytoplasmic side.

This sequence belongs to the RAMP family. In terms of assembly, heterodimer of CALCRL and RAMP2; the interaction forms the receptor complex for adrenomedullin/ADM. Heterodimer of CALCR and RAMP2; interaction forms the AMYR2 receptor complex for calcitonin/CALC and amylin/IAPP. Strongly expressed in lung, breast, immune system and fetal tissues.

The protein localises to the cell membrane. In terms of biological role, accessory protein that interacts with and modulates the function of G-protein coupled receptors including calcitonin gene-related peptide type 1 receptor (CALCRL) and calcitonin receptor (CALCR). Required for the transport of CALCRL to the plasma membrane. Together with CALCRL, form a receptor complex for adrenomedullin/ADM. Together with CALCR, act as a receptor complex for calcitonin/CT/CALC. Together with CALCR, also act as a receptor complex for amylin/IAPP. The sequence is that of Receptor activity-modifying protein 2 from Homo sapiens (Human).